The primary structure comprises 194 residues: dCTP deaminase (194 aa).

DCTP is bound by residues 110-115, Asp128, 136-138, Tyr171, Lys178, and Gln182; these read RSSLAR and VLE. The active-site Proton donor/acceptor is Glu138. The disordered stretch occupies residues 169–194; that stretch reads RPYNKRDNAKYKDQTSAVGSRISGEN. Positions 170-181 are enriched in basic and acidic residues; it reads PYNKRDNAKYKD. The segment covering 182–194 has biased composition (polar residues); it reads QTSAVGSRISGEN.

The protein belongs to the dCTP deaminase family. As to quaternary structure, homotrimer.

It carries out the reaction dCTP + H2O + H(+) = dUTP + NH4(+). It functions in the pathway pyrimidine metabolism; dUMP biosynthesis; dUMP from dCTP (dUTP route): step 1/2. In terms of biological role, catalyzes the deamination of dCTP to dUTP. In Marinomonas sp. (strain MWYL1), this protein is dCTP deaminase.